The chain runs to 108 residues: DNA-binding protein HBbu (108 aa).

It belongs to the bacterial histone-like protein family.

In terms of biological role, histone-like DNA-binding protein which is capable of wrapping DNA to stabilize it, and thus to prevent its denaturation under extreme environmental conditions. This is DNA-binding protein HBbu (hbb) from Borrelia andersonii (Borreliella andersonii).